A 232-amino-acid polypeptide reads, in one-letter code: Probable proteasome subunit alpha type-3 (232 aa).

The protein belongs to the peptidase T1A family. In terms of assembly, the 26S proteasome consists of a 20S proteasome core and two 19S regulatory subunits. The 20S proteasome core is composed of 28 subunits that are arranged in four stacked rings, resulting in a barrel-shaped structure. The two end rings are each formed by seven alpha subunits, and the two central rings are each formed by seven beta subunits. The catalytic chamber with the active sites is on the inside of the barrel.

Its subcellular location is the cytoplasm. It localises to the nucleus. In terms of biological role, the proteasome degrades poly-ubiquitinated proteins in the cytoplasm and in the nucleus. It is essential for the regulated turnover of proteins and for the removal of misfolded proteins. The proteasome is a multicatalytic proteinase complex that is characterized by its ability to cleave peptides with Arg, Phe, Tyr, Leu, and Glu adjacent to the leaving group at neutral or slightly basic pH. It has an ATP-dependent proteolytic activity. The sequence is that of Probable proteasome subunit alpha type-3 (PRE9) from Encephalitozoon cuniculi (strain GB-M1) (Microsporidian parasite).